A 108-amino-acid chain; its full sequence is FK506-binding protein 1A (108 aa).

The disordered stretch occupies residues 1-20; sequence MGVEVQRISPGDGKNFPKPG. Positions 20 to 108 constitute a PPIase FKBP-type domain; it reads GDTVSIHYTG…TFEVELLKIN (89 aa).

This sequence belongs to the FKBP-type PPIase family. FKBP1 subfamily.

Its subcellular location is the cytoplasm. It carries out the reaction [protein]-peptidylproline (omega=180) = [protein]-peptidylproline (omega=0). Inhibited by both FK506 and rapamycin. Functionally, PPIases accelerate the folding of proteins. It catalyzes the cis-trans isomerization of proline imidic peptide bonds in oligopeptides. The protein is FK506-binding protein 1A (fprA) of Emericella nidulans (strain FGSC A4 / ATCC 38163 / CBS 112.46 / NRRL 194 / M139) (Aspergillus nidulans).